A 334-amino-acid polypeptide reads, in one-letter code: MSDLTKFNKFFLTPNKLNAFLRVIGLCGLFSVIAISFGIYSYTRNEIPNIASLFLIVLGSVVLFLAFVIHFAALFKRNKLLKKVNKENRTNLWQKEMGNFKAIESFEFFEQGPISSDILPSFYPTALYNFEPLPRQFKVTYKDGSEFVFGHIYAIKRSSNKTEKVACLIAITPAINSENHFFLTDANYSLNKNVAQFEALTENKKQENISLFVEKDSNFSFQNLDTEVLNKVLFNPLNVYAKFNVYNDTVHTYLFMSVPTTFMDTKLKVNEAFDDLVTNIKLQASYDFKTLNSMQKVVDLLHNKLIKKPESKSSSQKSVETEIEKEVKDKLAKN.

A run of 2 helical transmembrane segments spans residues 19–39 and 55–75; these read AFLRVIGLCGLFSVIAISFGI and LIVLGSVVLFLAFVIHFAALF. Residues 308-334 are disordered; it reads KPESKSSSQKSVETEIEKEVKDKLAKN. Basic and acidic residues predominate over residues 319 to 334; it reads VETEIEKEVKDKLAKN.

The protein resides in the cell membrane. This is an uncharacterized protein from Mycoplasma genitalium (strain ATCC 33530 / DSM 19775 / NCTC 10195 / G37) (Mycoplasmoides genitalium).